A 628-amino-acid chain; its full sequence is Growth hormone receptor (628 aa).

The first 18 residues, 1–18 (MDLWQLLLTLAVVGSSNA), serve as a signal peptide directing secretion. The Extracellular segment spans residues 19-266 (FVGREAVTVT…FTCEEEFQFP (248 aa)). N-linked (GlcNAc...) asparagine glycosylation is found at Asn33, Asn40, and Asn46. 2 disulfide bridges follow: Cys56/Cys66 and Cys101/Cys112. Asn115 is a glycosylation site (N-linked (GlcNAc...) asparagine). Cys126 and Cys140 are disulfide-bonded. The 104-residue stretch at 151-254 (PPTGLNWTLM…EILYITLPQS (104 aa)) folds into the Fibronectin type-III domain. 3 N-linked (GlcNAc...) asparagine glycosylation sites follow: Asn156, Asn161, and Asn200. Positions 240 to 244 (YGEFS) match the WSXWS motif motif. The helical transmembrane segment at 267-287 (WFLIMIFGIFGLTVMLLVVMF) threads the bilayer. The Cytoplasmic segment spans residues 288 to 628 (SKQQRIKMLI…STDQLNKIML (341 aa)). The interval 294 to 379 (KMLILPPVPV…HQKSLNILGA (86 aa)) is required for JAK2 binding. A Box 1 motif motif is present at residues 297 to 305 (ILPPVPVPK). Positions 340 to 349 (DSWVEFIELD) match the UbE motif motif. At Ser341 the chain carries Phosphoserine. A phosphotyrosine mark is found at Tyr483 and Tyr585.

The protein belongs to the type I cytokine receptor family. Type 1 subfamily. On growth hormone (GH) binding, forms homodimers and binds JAK2 via a box 1-containing domain. In terms of processing, the soluble form (GHBP) is produced by phorbol ester-promoted proteolytic cleavage at the cell surface (shedding) by ADAM17/TACE. Shedding is inhibited by growth hormone (GH) binding to the receptor probably due to a conformational change in GHR rendering the receptor inaccessible to ADAM17. Post-translationally, on GH binding, phosphorylated on tyrosine residues in the cytoplasmic domain by JAK2. Ubiquitinated by the ECS(SOCS2) complex following ligand-binding and phosphorylation by JAK2, leading to its degradation by the proteasome. Regulation by the ECS(SOCS2) complex acts as a negative feedback loop of growth hormone receptor signaling. Ubiquitination is not sufficient for GHR internalization.

Its subcellular location is the cell membrane. The protein resides in the secreted. Functionally, receptor for pituitary gland growth hormone (GH1) involved in regulating postnatal body growth. On ligand binding, couples to the JAK2/STAT5 pathway. Its function is as follows. The soluble form (GHBP) acts as a reservoir of growth hormone in plasma and may be a modulator/inhibitor of GH signaling. In Cavia porcellus (Guinea pig), this protein is Growth hormone receptor (GHR).